A 267-amino-acid polypeptide reads, in one-letter code: Small ribosomal subunit protein uS2 (267 aa).

The disordered stretch occupies residues 222–267 (GKALRDQDSEEEIQNKEQDEVSQEEKDDILDEAMNEEDFEIPEDKE). Over residues 223-240 (KALRDQDSEEEIQNKEQD) the composition is skewed to basic and acidic residues. Positions 241–267 (EVSQEEKDDILDEAMNEEDFEIPEDKE) are enriched in acidic residues.

Belongs to the universal ribosomal protein uS2 family.

In Campylobacter hominis (strain ATCC BAA-381 / DSM 21671 / CCUG 45161 / LMG 19568 / NCTC 13146 / CH001A), this protein is Small ribosomal subunit protein uS2.